The primary structure comprises 163 residues: Large ribosomal subunit protein mL59 (163 aa).

A disordered region spans residues 33-53; the sequence is PAGADPETHKTPYQEESPNPF.

It belongs to the mitochondrion-specific ribosomal protein mL59 family. As to quaternary structure, component of the mitochondrial large ribosomal subunit (mt-LSU). Mature N.crassa 74S mitochondrial ribosomes consist of a small (37S) and a large (54S) subunit. The 37S small subunit contains a 16S ribosomal RNA (16S mt-rRNA) and 32 different proteins. The 54S large subunit contains a 23S rRNA (23S mt-rRNA) and 42 different proteins.

Its subcellular location is the mitochondrion. Its function is as follows. Component of the mitochondrial ribosome (mitoribosome), a dedicated translation machinery responsible for the synthesis of mitochondrial genome-encoded proteins, including at least some of the essential transmembrane subunits of the mitochondrial respiratory chain. The mitoribosomes are attached to the mitochondrial inner membrane and translation products are cotranslationally integrated into the membrane. In Neurospora crassa (strain ATCC 24698 / 74-OR23-1A / CBS 708.71 / DSM 1257 / FGSC 987), this protein is Large ribosomal subunit protein mL59 (mrpl25).